The following is a 205-amino-acid chain: MNQENFIRRYFIIGERRFSNYWWATVILIGSFGFLLTGISSYISTSLNSTALSSNIESQMQLPFFLSMLKNSNSTGAINFFPQGLLMCFYGSLGFLLSIYWWCLIFWNVGGGFNEFNKKENFIRIFRWGYPGKNRKIDLYYTLKDVESIRVEILQGFDSQRTIFLKLKGNREIPITGIGQPLTLQEIEKQASELANFLQVSLEGL.

The next 2 membrane-spanning stretches (helical) occupy residues 23–43 and 86–106; these read WATV…SSYI and LMCF…CLIF.

It belongs to the Ycf4 family.

The protein localises to the plastid. It localises to the chloroplast thylakoid membrane. In terms of biological role, seems to be required for the assembly of the photosystem I complex. This is Photosystem I assembly protein Ycf4 from Tetradesmus obliquus (Green alga).